The chain runs to 118 residues: Large ribosomal subunit protein uL18 (118 aa).

The protein belongs to the universal ribosomal protein uL18 family. As to quaternary structure, part of the 50S ribosomal subunit; part of the 5S rRNA/L5/L18/L25 subcomplex. Contacts the 5S and 23S rRNAs.

Functionally, this is one of the proteins that bind and probably mediate the attachment of the 5S RNA into the large ribosomal subunit, where it forms part of the central protuberance. In Acidobacterium capsulatum (strain ATCC 51196 / DSM 11244 / BCRC 80197 / JCM 7670 / NBRC 15755 / NCIMB 13165 / 161), this protein is Large ribosomal subunit protein uL18.